Consider the following 529-residue polypeptide: uncharacterized protein (529 aa).

Residues 1–20 (MGADLKQPQDADSPPKGVSR) are disordered. Residues 1 to 52 (MGADLKQPQDADSPPKGVSRRRFLTTGAAAVVGTGVGAGGTALLSSHPRGPA) constitute a signal peptide (tat-type signal).

Predicted to be exported by the Tat system. The position of the signal peptide cleavage has not been experimentally proven.

This is an uncharacterized protein from Mycobacterium tuberculosis (strain CDC 1551 / Oshkosh).